The following is a 138-amino-acid chain: Large ribosomal subunit protein uL16 (138 aa).

Over residues 1-13 (MLQPARRKYRKEQ) the composition is skewed to basic residues. Residues 1 to 22 (MLQPARRKYRKEQKGRNTGVAT) form a disordered region.

The protein belongs to the universal ribosomal protein uL16 family. As to quaternary structure, part of the 50S ribosomal subunit.

Its function is as follows. Binds 23S rRNA and is also seen to make contacts with the A and possibly P site tRNAs. The protein is Large ribosomal subunit protein uL16 of Polaromonas naphthalenivorans (strain CJ2).